The primary structure comprises 979 residues: Oncostatin-M-specific receptor subunit beta (979 aa).

An N-terminal signal peptide occupies residues 1–27 (MALFAVFQTTFFLTLLSLRTYQSEVLA). Residues 28-740 (ERLPLTPVSL…VTTPDEHSSM (713 aa)) lie on the Extracellular side of the membrane. The N-linked (GlcNAc...) asparagine glycan is linked to Asn-163. The cysteines at positions 245 and 255 are disulfide-linked. 2 N-linked (GlcNAc...) asparagine glycosylation sites follow: Asn-326 and Asn-380. 4 consecutive Fibronectin type-III domains span residues 335-428 (NPFS…TLEA), 433-528 (APDV…DPEN), 529-623 (KEVE…SQEL), and 625-736 (PSDN…TPDE). A WSXWS motif motif is present at residues 415–419 (WSEWS). 2 N-linked (GlcNAc...) asparagine glycosylation sites follow: Asn-446 and Asn-580. Residues 741–761 (LIHILLPMVFCVLLIMVMCYL) form a helical membrane-spanning segment. The Cytoplasmic portion of the chain corresponds to 762-979 (KSQWIKETCY…TLLDPGEHYC (218 aa)). The short motif at 770–778 (CYPDIPDPY) is the Box 1 motif element. Ser-826 and Ser-889 each carry phosphoserine.

Belongs to the type I cytokine receptor family. Type 2 subfamily. In terms of assembly, heterodimer composed of OSMR and IL6ST (type II OSM receptor). Heterodimer with IL31RA to form the IL31 receptor. In terms of tissue distribution, expressed in keratinocytes (at protein level). Expressed at relatively high levels in all neural cells as well as fibroblast and epithelial cells.

The protein resides in the membrane. In terms of biological role, associates with IL31RA to form the IL31 receptor. Binds IL31 to activate STAT3 and possibly STAT1 and STAT5. Capable of transducing OSM-specific signaling events. The protein is Oncostatin-M-specific receptor subunit beta (OSMR) of Homo sapiens (Human).